A 173-amino-acid chain; its full sequence is uncharacterized protein (173 aa).

Residues His-80–Asp-107 are disordered. The segment covering Lys-85–Asp-107 has biased composition (basic and acidic residues).

This is an uncharacterized protein from Autographa californica nuclear polyhedrosis virus (AcMNPV).